The chain runs to 233 residues: EEF1A lysine methyltransferase 2 (233 aa).

The protein belongs to the class I-like SAM-binding methyltransferase superfamily. EFM4 family.

The protein localises to the cytoplasm. It is found in the nucleus. The catalysed reaction is L-lysyl-[protein] + 3 S-adenosyl-L-methionine = N(6),N(6),N(6)-trimethyl-L-lysyl-[protein] + 3 S-adenosyl-L-homocysteine + 3 H(+). Its function is as follows. Protein-lysine methyltransferase that selectively catalyzes the trimethylation of EEF1A at 'Lys-318'. The chain is EEF1A lysine methyltransferase 2 from Danio rerio (Zebrafish).